A 65-amino-acid chain; its full sequence is KEGYLVNSYTGCKYECLKLGDNDYCLRECRQQYGKSGGYCYAFACWCTHLYEQAVVWPLPNKTCN.

In terms of domain architecture, LCN-type CS-alpha/beta spans 1–65; the sequence is KEGYLVNSYT…VWPLPNKTCN (65 aa). 4 disulfide bridges follow: Cys12/Cys64, Cys16/Cys40, Cys25/Cys45, and Cys29/Cys47.

Belongs to the long (4 C-C) scorpion toxin superfamily. Sodium channel inhibitor family. Beta subfamily. In terms of tissue distribution, expressed by the venom gland.

Its subcellular location is the secreted. In terms of biological role, beta toxins bind voltage-independently at site-4 of sodium channels (Nav) and shift the voltage of activation toward more negative potentials thereby affecting sodium channel activation and promoting spontaneous and repetitive firing. Highly potent. The polypeptide is Toxin CsEM1 (Centruroides sculpturatus (Arizona bark scorpion)).